The sequence spans 81 residues: Delta-conotoxin PVIA (81 aa).

A signal peptide spans 1–22; that stretch reads MKLTCVMIVAVLFLTAWTFVTA. Positions 23–49 are excised as a propeptide; sequence DDSKNGLENHFWKARDEMKNREASKLD. 3 disulfide bridges follow: Cys-54–Cys-69, Cys-61–Cys-73, and Cys-68–Cys-78. Pro-57 and Pro-65 each carry 4-hydroxyproline. Position 80 is a glycine amide; in form delta-conotoxin PVIA (Gly-80).

The difference between delta-conotoxin PVIA and [deamido]-delta-conotoxin PVIA lies in the state of amidation of Gly-80. In terms of tissue distribution, expressed by the venom duct.

It is found in the secreted. In terms of biological role, delta-conotoxins bind to site 6 of voltage-gated sodium channels (Nav) and inhibit the inactivation process. This toxin shows weak effects on rNav1.2/SCN2A (EC(50)=2.9 uM), rNav1.4/SCN4A (EC(50)=5.2 uM), hNav1.7/SCN9A (EC(50)=1.9 uM) and rNav1.7/SCN9A (EC(50)=6.4 uM). In vivo, this toxin shows different effects. In mice, injection of this toxin causes hyperactivity, rapid running, limb extension, and death. In fish, the peptide elicites spurts of rapid swimming, with twisted motions, quivering fins and the lockjaw extended mouth syndrome. Rigid paralysis and death are observed at higher doses. In mollusks, this peptide is inactive. Injection of this peptide together with the kappa-conotoxin PVIIA causes the sudden tetanus of prey (STOP) syndrome, which is a single, lethal 'fin-pop' in envenomed fish. The chain is Delta-conotoxin PVIA from Conus purpurascens (Purple cone).